A 331-amino-acid chain; its full sequence is Acyl-CoA desaturase 1 (331 aa).

Residues 1-46 (MTEVDDGCGGRLRGSVLLEDECDLKQECETPTHSLVQGRDPPVVVV) lie on the Cytoplasmic side of the membrane. A helical membrane pass occupies residues 47–67 (WRNVVLMSVLHTAAVYGLVLL). Position 49 (asparagine 49) interacts with substrate. The Lumenal segment spans residues 68-71 (PSAS). A helical membrane pass occupies residues 72-90 (AYTLLAFCFVSSALGITAG). The Cytoplasmic segment spans residues 91–189 (AHRLWSHRSY…DRVVMFQRRF (99 aa)). Fe cation-binding residues include histidine 92 and histidine 97. Residues 92–97 (HRLWSH) carry the Histidine box-1 motif. Residues asparagine 120, arginine 127, and aspartate 128 each contribute to the substrate site. The Fe cation site is built by histidine 129, histidine 132, and histidine 133. The Histidine box-2 motif lies at 129 to 133 (HRVHH). Lysine 161 lines the substrate pocket. A helical membrane pass occupies residues 190–209 (YKHSVVVMCFLIPAMLPWFL). Residues 210 to 213 (WAES) lie on the Lumenal side of the membrane. The chain crosses the membrane as a helical span at residues 214–235 (LWVGYFVPVLLRYALVLNATWL). Position 234 (tryptophan 234) interacts with substrate. Residues 236–331 (VNSAAHMWGN…RTGDGSHRSG (96 aa)) lie on the Cytoplasmic side of the membrane. Residues histidine 241, histidine 270, histidine 273, and histidine 274 each contribute to the Fe cation site. The Histidine box-3 motif lies at 270–274 (HNYHH).

This sequence belongs to the fatty acid desaturase type 1 family. Requires Fe(2+) as cofactor. In terms of tissue distribution, expression is highest in liver, followed by brain and intestine, and lowest in spleen. Also expressed in heart, gill and muscle.

The protein resides in the endoplasmic reticulum membrane. The catalysed reaction is octadecanoyl-CoA + 2 Fe(II)-[cytochrome b5] + O2 + 2 H(+) = (9Z)-octadecenoyl-CoA + 2 Fe(III)-[cytochrome b5] + 2 H2O. Functionally, stearoyl-CoA desaturase that utilizes O(2) and electrons from reduced cytochrome b5 to introduce the first double bond into saturated fatty acyl-CoA substrates. Catalyzes the insertion of a cis double bond at the delta-9 position into fatty acyl-CoA substrates including palmitoyl-CoA and stearoyl-CoA. Contributes to the biosynthesis of membrane phospholipids, cholesterol esters and triglycerides. The polypeptide is Acyl-CoA desaturase 1 (Tachysurus fulvidraco (Yellow catfish)).